The chain runs to 184 residues: Oocyte-secreted protein 4A (184 aa).

Positions 1–19 (MKISCVLGKLLMLFELIHG) are cleaved as a signal peptide. N-linked (GlcNAc...) asparagine glycosylation is present at N128.

The protein belongs to the PLAC1 family.

The protein resides in the secreted. The chain is Oocyte-secreted protein 4A from Homo sapiens (Human).